A 463-amino-acid chain; its full sequence is V-type ATP synthase beta chain (463 aa).

This sequence belongs to the ATPase alpha/beta chains family.

Its function is as follows. Produces ATP from ADP in the presence of a proton gradient across the membrane. The V-type beta chain is a regulatory subunit. The protein is V-type ATP synthase beta chain of Halothermothrix orenii (strain H 168 / OCM 544 / DSM 9562).